Here is a 155-residue protein sequence, read N- to C-terminus: Myosin light chain alkali (155 aa).

EF-hand domains follow at residues 7–41 and 80–115; these read REVENVEFVFEVMGSPGEGIDAVDLGDALRALNLN and GCYEDFIECLKLYDKEENGTMLLAELQHALLALGES.

In terms of assembly, myosin is a hexamer of 2 heavy chains and 4 light chains. In terms of tissue distribution, indirect flight muscle isoform is found only in the indirect flight muscles. The larval and adult isoform is present in the larval and adult musculature.

In Drosophila melanogaster (Fruit fly), this protein is Myosin light chain alkali (Mlc1).